A 381-amino-acid chain; its full sequence is tRNA (guanine(26)-N(2))-dimethyltransferase (381 aa).

Residues 6–378 (FEVHEGKAKV…APYEVFVEVM (373 aa)) form the Trm1 methyltransferase domain. S-adenosyl-L-methionine-binding residues include Arg-38, Arg-63, Asp-80, Asp-122, and Ala-123.

Belongs to the class I-like SAM-binding methyltransferase superfamily. Trm1 family. In terms of assembly, monomer.

It carries out the reaction guanosine(26) in tRNA + 2 S-adenosyl-L-methionine = N(2)-dimethylguanosine(26) in tRNA + 2 S-adenosyl-L-homocysteine + 2 H(+). Dimethylates a single guanine residue at position 26 of a number of tRNAs using S-adenosyl-L-methionine as donor of the methyl groups. The chain is tRNA (guanine(26)-N(2))-dimethyltransferase from Pyrococcus furiosus (strain ATCC 43587 / DSM 3638 / JCM 8422 / Vc1).